The sequence spans 289 residues: Diaminopimelate epimerase (289 aa).

Asparagine 15 and asparagine 76 together coordinate substrate. Cysteine 85 acts as the Proton donor in catalysis. Residues 86-87, asparagine 158, asparagine 191, and 209-210 each bind substrate; these read GN and ER. The Proton acceptor role is filled by cysteine 218. 219–220 is a substrate binding site; sequence GT.

It belongs to the diaminopimelate epimerase family. In terms of assembly, homodimer.

The protein localises to the cytoplasm. The enzyme catalyses (2S,6S)-2,6-diaminopimelate = meso-2,6-diaminopimelate. Its pathway is amino-acid biosynthesis; L-lysine biosynthesis via DAP pathway; DL-2,6-diaminopimelate from LL-2,6-diaminopimelate: step 1/1. Its function is as follows. Catalyzes the stereoinversion of LL-2,6-diaminopimelate (L,L-DAP) to meso-diaminopimelate (meso-DAP), a precursor of L-lysine and an essential component of the bacterial peptidoglycan. The polypeptide is Diaminopimelate epimerase (Streptomyces coelicolor (strain ATCC BAA-471 / A3(2) / M145)).